We begin with the raw amino-acid sequence, 418 residues long: Tol-Pal system protein TolB (418 aa).

A signal peptide spans 1–21; sequence MKLFVQLVLFISLFIPYSTKA.

It belongs to the TolB family. In terms of assembly, the Tol-Pal system is composed of five core proteins: the inner membrane proteins TolA, TolQ and TolR, the periplasmic protein TolB and the outer membrane protein Pal. They form a network linking the inner and outer membranes and the peptidoglycan layer.

It localises to the periplasm. In terms of biological role, part of the Tol-Pal system, which plays a role in outer membrane invagination during cell division and is important for maintaining outer membrane integrity. In Wolbachia pipientis subsp. Culex pipiens (strain wPip), this protein is Tol-Pal system protein TolB.